The primary structure comprises 91 residues: UPF0386 protein CC_0226 (91 aa).

Belongs to the UPF0386 family.

The sequence is that of UPF0386 protein CC_0226 from Caulobacter vibrioides (strain ATCC 19089 / CIP 103742 / CB 15) (Caulobacter crescentus).